Here is a 121-residue protein sequence, read N- to C-terminus: Apoptin (121 aa).

2 disordered regions span residues 1 to 28 (MNAL…LETP) and 57 to 121 (LRSA…CIRL). Polar residues predominate over residues 58–70 (RSATADNSESTGF). Basic and acidic residues predominate over residues 88-102 (RSCDPSEYRVSELKE).

Belongs to the gyrovirus apoptin family.

Its subcellular location is the host nucleus. Functionally, may act as transcriptional regulator. Induces apoptosis in infected cells. Element of infectious replication cycle. This is Apoptin (VP3) from Gallus gallus (Chicken).